A 143-amino-acid chain; its full sequence is Transcriptional regulator MraZ (143 aa).

2 SpoVT-AbrB domains span residues Thr5 to Glu47 and Ala76 to Ala119.

It belongs to the MraZ family. As to quaternary structure, forms oligomers.

It is found in the cytoplasm. Its subcellular location is the nucleoid. The chain is Transcriptional regulator MraZ from Corynebacterium diphtheriae (strain ATCC 700971 / NCTC 13129 / Biotype gravis).